The following is a 94-amino-acid chain: Large ribosomal subunit protein bL25 (94 aa).

The protein belongs to the bacterial ribosomal protein bL25 family. As to quaternary structure, part of the 50S ribosomal subunit; part of the 5S rRNA/L5/L18/L25 subcomplex. Contacts the 5S rRNA. Binds to the 5S rRNA independently of L5 and L18.

In terms of biological role, this is one of the proteins that binds to the 5S RNA in the ribosome where it forms part of the central protuberance. The protein is Large ribosomal subunit protein bL25 of Shigella boydii serotype 18 (strain CDC 3083-94 / BS512).